We begin with the raw amino-acid sequence, 328 residues long: tRNA dimethylallyltransferase (328 aa).

An ATP-binding site is contributed by Gly-25 to Thr-32. Thr-27–Thr-32 contributes to the substrate binding site. The segment at Asp-50–Gln-53 is interaction with substrate tRNA.

The protein belongs to the IPP transferase family. As to quaternary structure, monomer. It depends on Mg(2+) as a cofactor.

The catalysed reaction is adenosine(37) in tRNA + dimethylallyl diphosphate = N(6)-dimethylallyladenosine(37) in tRNA + diphosphate. Its function is as follows. Catalyzes the transfer of a dimethylallyl group onto the adenine at position 37 in tRNAs that read codons beginning with uridine, leading to the formation of N6-(dimethylallyl)adenosine (i(6)A). The polypeptide is tRNA dimethylallyltransferase (Halothermothrix orenii (strain H 168 / OCM 544 / DSM 9562)).